A 363-amino-acid chain; its full sequence is Mitogen-activated protein kinase 13 (363 aa).

In terms of domain architecture, Protein kinase spans 33–319 (IPPIEPIGRG…VDEALKQPYL (287 aa)). ATP contacts are provided by residues 39-47 (IGRGAYGIV) and lysine 62. Aspartate 159 acts as the Proton acceptor in catalysis. Residue threonine 191 is modified to Phosphothreonine. The short motif at 191–193 (TEY) is the TXY element. Tyrosine 193 carries the phosphotyrosine modification. Threonine 196 bears the Phosphothreonine mark.

It belongs to the protein kinase superfamily. CMGC Ser/Thr protein kinase family. MAP kinase subfamily. In terms of assembly, interacts with MKK6. Post-translationally, dually phosphorylated on Thr-191 and Tyr-193, which activates the enzyme. As to expression, expressed in roots, stems and flower buds.

The catalysed reaction is L-seryl-[protein] + ATP = O-phospho-L-seryl-[protein] + ADP + H(+). It catalyses the reaction L-threonyl-[protein] + ATP = O-phospho-L-threonyl-[protein] + ADP + H(+). With respect to regulation, activated by threonine and tyrosine phosphorylation. Activated by the MAP kinase kinase MKK6 in vitro. Its function is as follows. MKK6-MPK13 module positively regulates lateral root formation. This chain is Mitogen-activated protein kinase 13 (MPK13), found in Arabidopsis thaliana (Mouse-ear cress).